Here is a 334-residue protein sequence, read N- to C-terminus: Methionine adenosyltransferase 2 subunit beta (334 aa).

NADP(+) is bound by residues 37–40 (TGLL), 60–62 (FRR), 71–72 (NL), cysteine 93, arginine 97, tyrosine 159, and leucine 185. The residue at position 309 (threonine 309) is a Phosphothreonine. The interval 319-334 (LWPFLIDKRWRQTVFH) is required for interaction with MAT2A.

Belongs to the dTDP-4-dehydrorhamnose reductase family. MAT2B subfamily. In terms of assembly, heterotrimer; composed of a catalytic MAT2A homodimer that binds one regulatory MAT2B chain. Heterohexamer; composed of a central, catalytic MAT2A homotetramer flanked on either side by a regulatory MAT2B chain. NADP binding increases the affinity for MAT2A.

The protein operates within amino-acid biosynthesis; S-adenosyl-L-methionine biosynthesis; S-adenosyl-L-methionine from L-methionine: step 1/1. Regulatory subunit of S-adenosylmethionine synthetase 2, an enzyme that catalyzes the formation of S-adenosylmethionine from methionine and ATP. Regulates MAT2A catalytic activity by changing its kinetic properties, increasing its affinity for L-methionine. Can bind NADP (in vitro). This Rattus norvegicus (Rat) protein is Methionine adenosyltransferase 2 subunit beta (Mat2b).